Reading from the N-terminus, the 336-residue chain is DNA-directed RNA polymerase subunit alpha (336 aa).

The tract at residues 1-232 (MIQKNWQELI…DQLGVFVNFD (232 aa)) is alpha N-terminal domain (alpha-NTD). Positions 248-336 (FNPALLKKVD…DLAKRYEDQY (89 aa)) are alpha C-terminal domain (alpha-CTD).

It belongs to the RNA polymerase alpha chain family. Homodimer. The RNAP catalytic core consists of 2 alpha, 1 beta, 1 beta' and 1 omega subunit. When a sigma factor is associated with the core the holoenzyme is formed, which can initiate transcription.

The enzyme catalyses RNA(n) + a ribonucleoside 5'-triphosphate = RNA(n+1) + diphosphate. Its function is as follows. DNA-dependent RNA polymerase catalyzes the transcription of DNA into RNA using the four ribonucleoside triphosphates as substrates. In Rhizobium rhizogenes (strain K84 / ATCC BAA-868) (Agrobacterium radiobacter), this protein is DNA-directed RNA polymerase subunit alpha.